The sequence spans 151 residues: S-protein homolog 27 (151 aa).

Asn-91 and Asn-123 each carry an N-linked (GlcNAc...) asparagine glycan.

The protein belongs to the plant self-incompatibility (S1) protein family.

The protein localises to the secreted. In Arabidopsis thaliana (Mouse-ear cress), this protein is S-protein homolog 27.